A 120-amino-acid polypeptide reads, in one-letter code: MYAIVRDRGMQYRVEEGQALDIALLDAEPGSEIELGDVLLIGGEQPRVGTPTVDGAKVVATVLGTIKGDKIVVFRYKNKKRYRRRTGHRQEYTRVSISKIIVDADEQHVTGSMEGETNGA.

This sequence belongs to the bacterial ribosomal protein bL21 family. As to quaternary structure, part of the 50S ribosomal subunit. Contacts protein L20.

This protein binds to 23S rRNA in the presence of protein L20. This Roseiflexus sp. (strain RS-1) protein is Large ribosomal subunit protein bL21.